The following is a 1209-amino-acid chain: DNA-directed RNA polymerase subunit beta (1209 aa).

Residues 1173-1192 (QQEKKKLAEEAAKKDDKPDE) are compositionally biased toward basic and acidic residues. Residues 1173 to 1209 (QQEKKKLAEEAAKKDDKPDEPVDESDSSTSSDDKVSK) are disordered.

Belongs to the RNA polymerase beta chain family. In terms of assembly, the RNAP catalytic core consists of 2 alpha, 1 beta, 1 beta' and 1 omega subunit. When a sigma factor is associated with the core the holoenzyme is formed, which can initiate transcription.

It carries out the reaction RNA(n) + a ribonucleoside 5'-triphosphate = RNA(n+1) + diphosphate. Its function is as follows. DNA-dependent RNA polymerase catalyzes the transcription of DNA into RNA using the four ribonucleoside triphosphates as substrates. This chain is DNA-directed RNA polymerase subunit beta, found in Lactobacillus johnsonii (strain CNCM I-12250 / La1 / NCC 533).